Consider the following 224-residue polypeptide: Artemin (224 aa).

A signal peptide spans 1–39 (MELGLAEPTALSHCLRPRWQSAWWPTLAVLALLSCVTEA). Residues 40–111 (SLDPMSRSPA…AALRGARAAR (72 aa)) constitute a propeptide that is removed on maturation. The interval 43-124 (PMSRSPAARD…RSSRARTTDA (82 aa)) is disordered. The segment covering 80-95 (RPPPQSPQPAPPPPGP) has biased composition (pro residues). Residues 96-116 (ALQSPPAALRGARAARAGTRS) show a composition bias toward low complexity. 3 disulfide bridges follow: cysteine 127–cysteine 192, cysteine 154–cysteine 220, and cysteine 158–cysteine 222. Asparagine 206 carries an N-linked (GlcNAc...) asparagine glycan.

This sequence belongs to the TGF-beta family. GDNF subfamily. In terms of assembly, homodimer; disulfide-linked. Interacts with GFRA3 coreceptor and RET: forms a 2:2:2 ternary complex composed of ARTN ligand, GFRA3 and RET receptor.

It is found in the secreted. Functionally, growth factor that supports the survival of sensory and sympathetic peripheral neurons in culture and also supports the survival of dopaminergic neurons of the ventral mid-brain. Acts by binding to its coreceptor, GFRA3, leading to autophosphorylation and activation of the RET receptor. Strong attractant of gut hematopoietic cells thus promoting the formation Peyer's patch-like structures, a major component of the gut-associated lymphoid tissue. The polypeptide is Artemin (Mus musculus (Mouse)).